We begin with the raw amino-acid sequence, 64 residues long: Lantipeptide Flvbeta.d (64 aa).

Residues 1 to 31 (MDNNTEKFNELAAIADESELNEMLDENITGA) constitute a propeptide, cleaved by FlvT. Residues 33-37 (STIQC) constitute a cross-link (lanthionine (Ser-Cys); by FlvM2). Residues Thr34 and Thr41 each carry the 2,3-didehydrobutyrine; by FlvM2 modification. 3 cross-links (beta-methyllanthionine (Thr-Cys); by FlvM2) span residues 44-52 (TILSVVFDC), 55-58 (TSAC), and 59-62 (TPPC). A cross-link (lanthionine (Ser-Cys); by FlvM2) is located at residues 47-53 (SVVFDCC).

Post-translationally, contains LL-lanthionine, DL-lanthionine, and DL-beta-methyllanthionine, when coepressed in E.coli with the flavecin synthetase FlvM2.

The protein localises to the secreted. In terms of biological role, lanthionine-containing peptide that does probably not show antibacterial activity, since its analog [+2]Flvbeta.d does not show antibacterial activity against M.luteus. Also does not show antibiotic activity when tested with [Del2]Flvalpha.a, an analog of Flvalpha.a, which is encoded by the same operon than Flvbeta.d. The bactericidal activity of lantibiotics is based on depolarization of energized bacterial cytoplasmic membranes, initiated by the formation of aqueous transmembrane pores. This is Lantipeptide Flvbeta.d from Ruminococcus flavefaciens.